The chain runs to 444 residues: Enolase (444 aa).

Residues histidine 163 and glutamate 172 each contribute to the substrate site. The Proton donor role is filled by glutamate 215. The Mg(2+) site is built by aspartate 250, glutamate 300, and aspartate 327. Positions 300 and 327 each coordinate substrate. Lysine 352 serves as the catalytic Proton acceptor. Residues 379–382 and lysine 403 contribute to the substrate site; that span reads SHRS.

Belongs to the enolase family. In terms of assembly, homodimer. Mg(2+) is required as a cofactor.

The protein localises to the cytoplasm. The enzyme catalyses (2R)-2-phosphoglycerate = phosphoenolpyruvate + H2O. It functions in the pathway carbohydrate degradation; glycolysis; pyruvate from D-glyceraldehyde 3-phosphate: step 4/5. This is Enolase (PGH1) from Mesembryanthemum crystallinum (Common ice plant).